Reading from the N-terminus, the 226-residue chain is Putative ABC transporter ATP-binding protein BQ02700 (226 aa).

One can recognise an ABC transporter domain in the interval 4-225 (IKFDKVTQVF…VAIKEYIRRM (222 aa)). 35-42 (GANGSGKS) serves as a coordination point for ATP.

This sequence belongs to the ABC transporter superfamily.

The protein resides in the cell inner membrane. In terms of biological role, probably part of an ABC transporter complex. Responsible for energy coupling to the transport system. The chain is Putative ABC transporter ATP-binding protein BQ02700 from Bartonella quintana (strain Toulouse) (Rochalimaea quintana).